The chain runs to 131 residues: Holo-[acyl-carrier-protein] synthase (131 aa).

Mg(2+) contacts are provided by Asp8 and Glu57.

It belongs to the P-Pant transferase superfamily. AcpS family. Mg(2+) serves as cofactor.

The protein resides in the cytoplasm. The enzyme catalyses apo-[ACP] + CoA = holo-[ACP] + adenosine 3',5'-bisphosphate + H(+). Its function is as follows. Transfers the 4'-phosphopantetheine moiety from coenzyme A to a Ser of acyl-carrier-protein. The protein is Holo-[acyl-carrier-protein] synthase of Thiobacillus denitrificans (strain ATCC 25259 / T1).